Reading from the N-terminus, the 274-residue chain is tRNA-cytidine(32) 2-sulfurtransferase (274 aa).

The PP-loop motif motif lies at 40–45; that stretch reads SGGKDS. [4Fe-4S] cluster contacts are provided by Cys115, Cys118, and Cys206.

It belongs to the TtcA family. Homodimer. The cofactor is Mg(2+). It depends on [4Fe-4S] cluster as a cofactor.

The protein localises to the cytoplasm. The enzyme catalyses cytidine(32) in tRNA + S-sulfanyl-L-cysteinyl-[cysteine desulfurase] + AH2 + ATP = 2-thiocytidine(32) in tRNA + L-cysteinyl-[cysteine desulfurase] + A + AMP + diphosphate + H(+). The protein operates within tRNA modification. Catalyzes the ATP-dependent 2-thiolation of cytidine in position 32 of tRNA, to form 2-thiocytidine (s(2)C32). The sulfur atoms are provided by the cysteine/cysteine desulfurase (IscS) system. This chain is tRNA-cytidine(32) 2-sulfurtransferase, found in Pseudomonas paraeruginosa (strain DSM 24068 / PA7) (Pseudomonas aeruginosa (strain PA7)).